The chain runs to 440 residues: 3-phosphoshikimate 1-carboxyvinyltransferase (440 aa).

Residues Lys19, Ser20, and Arg24 each contribute to the 3-phosphoshikimate site. A phosphoenolpyruvate-binding site is contributed by Lys19. Residues Gly92 and Arg121 each coordinate phosphoenolpyruvate. 3-phosphoshikimate is bound by residues Ser166, Gln168, Asp315, and Lys342. Gln168 provides a ligand contact to phosphoenolpyruvate. Residue Asp315 is the Proton acceptor of the active site. 2 residues coordinate phosphoenolpyruvate: Arg346 and Arg399.

The protein belongs to the EPSP synthase family. Monomer.

The protein localises to the cytoplasm. The enzyme catalyses 3-phosphoshikimate + phosphoenolpyruvate = 5-O-(1-carboxyvinyl)-3-phosphoshikimate + phosphate. It functions in the pathway metabolic intermediate biosynthesis; chorismate biosynthesis; chorismate from D-erythrose 4-phosphate and phosphoenolpyruvate: step 6/7. Functionally, catalyzes the transfer of the enolpyruvyl moiety of phosphoenolpyruvate (PEP) to the 5-hydroxyl of shikimate-3-phosphate (S3P) to produce enolpyruvyl shikimate-3-phosphate and inorganic phosphate. The chain is 3-phosphoshikimate 1-carboxyvinyltransferase from Leptospira interrogans serogroup Icterohaemorrhagiae serovar copenhageni (strain Fiocruz L1-130).